The chain runs to 777 residues: B3 domain-containing protein REM-like 1 (777 aa).

A DNA-binding region (TF-B3 1) is located at residues F97–E193. Disordered stretches follow at residues V200–S248 and K344–S391. Over residues K218 to D243 the composition is skewed to basic and acidic residues. A DNA-binding region (TF-B3 2) is located at residues T252–S347. The segment covering K344 to M368 has biased composition (polar residues). Residues K370–E388 are compositionally biased toward basic and acidic residues. DNA-binding regions (TF-B3) lie at residues F582–S676 and F683–K777.

Its subcellular location is the nucleus. In Arabidopsis thaliana (Mouse-ear cress), this protein is B3 domain-containing protein REM-like 1.